Reading from the N-terminus, the 387-residue chain is Galactokinase (387 aa).

Residue 33–36 coordinates substrate; it reads EHID. Residues Ser67 and 124-130 each bind ATP; that span reads GAGLSSS. The Mg(2+) site is built by Ser130 and Glu162. Residue Asp174 is the Proton acceptor of the active site. Position 224 (Tyr224) interacts with substrate.

It belongs to the GHMP kinase family. GalK subfamily.

The protein resides in the cytoplasm. The enzyme catalyses alpha-D-galactose + ATP = alpha-D-galactose 1-phosphate + ADP + H(+). Its pathway is carbohydrate metabolism; galactose metabolism. Its function is as follows. Catalyzes the transfer of the gamma-phosphate of ATP to D-galactose to form alpha-D-galactose-1-phosphate (Gal-1-P). The protein is Galactokinase of Clostridium perfringens (strain SM101 / Type A).